The chain runs to 46 residues: MKKKISLSCSLCKNRNYKTNKSVQSRLQINKFCKICRKSTLHQEEK.

This sequence belongs to the bacterial ribosomal protein bL33 family.

This is Large ribosomal subunit protein bL33A from Mesomycoplasma hyopneumoniae (strain 7448) (Mycoplasma hyopneumoniae).